We begin with the raw amino-acid sequence, 334 residues long: E3 ubiquitin-protein ligase CIP8 (334 aa).

The disordered stretch occupies residues 111 to 158 (LNSRNEIDDDEDEDEDDGDEEEEDEEENLTVNDEEDEEDDLRRRNRFP). The segment covering 117 to 149 (IDDDEDEDEDDGDEEEEDEEENLTVNDEEDEED) has biased composition (acidic residues). The RING-type; atypical zinc finger occupies 257 to 298 (CAVCKDGMVMGETGKKLPCGHCYHGDCIVPWLGTRNSCPVCR). The interval 307 to 334 (EYEEERKKRTSTVSDSAAASSSSSTSRY) is disordered. Residues 317-334 (STVSDSAAASSSSSTSRY) show a composition bias toward low complexity.

As to quaternary structure, interacts with the RING finger of COP1. Interacts with UBC8 through its N-terminal region. Expressed in both light- and dark-grown seedlings.

The protein localises to the cytoplasm. The enzyme catalyses S-ubiquitinyl-[E2 ubiquitin-conjugating enzyme]-L-cysteine + [acceptor protein]-L-lysine = [E2 ubiquitin-conjugating enzyme]-L-cysteine + N(6)-ubiquitinyl-[acceptor protein]-L-lysine.. The protein operates within protein modification; protein ubiquitination. Functionally, E3 ubiquitin-protein ligase that mediates ubiquitination and subsequent proteasomal degradation of target proteins. Probably forms a minimal ubiquitin ligase complex in cooperation with the E2 enzyme UBC8. Its interaction with COP1 suggests that it may participate in proteasome-mediated degradation of HY5 in vivo. This chain is E3 ubiquitin-protein ligase CIP8 (CIP8), found in Arabidopsis thaliana (Mouse-ear cress).